Reading from the N-terminus, the 436-residue chain is 3-ketoacyl-CoA thiolase (436 aa).

The active-site Acyl-thioester intermediate is Cys99. Active-site proton acceptor residues include His392 and Cys422.

Belongs to the thiolase-like superfamily. Thiolase family. As to quaternary structure, heterotetramer of two alpha chains (FadJ) and two beta chains (FadI).

Its subcellular location is the cytoplasm. The catalysed reaction is an acyl-CoA + acetyl-CoA = a 3-oxoacyl-CoA + CoA. The protein operates within lipid metabolism; fatty acid beta-oxidation. Catalyzes the final step of fatty acid oxidation in which acetyl-CoA is released and the CoA ester of a fatty acid two carbons shorter is formed. In Salmonella dublin (strain CT_02021853), this protein is 3-ketoacyl-CoA thiolase.